Consider the following 543-residue polypeptide: Chaperonin GroEL (543 aa).

Residues 30 to 33 (TLGP), K51, 87 to 91 (DGTTT), G415, 480 to 482 (DAA), and D496 each bind ATP.

The protein belongs to the chaperonin (HSP60) family. In terms of assembly, forms a cylinder of 14 subunits composed of two heptameric rings stacked back-to-back. Interacts with the co-chaperonin GroES.

The protein resides in the cytoplasm. The catalysed reaction is ATP + H2O + a folded polypeptide = ADP + phosphate + an unfolded polypeptide.. Its function is as follows. Together with its co-chaperonin GroES, plays an essential role in assisting protein folding. The GroEL-GroES system forms a nano-cage that allows encapsulation of the non-native substrate proteins and provides a physical environment optimized to promote and accelerate protein folding. In Hydrogenobaculum sp. (strain Y04AAS1), this protein is Chaperonin GroEL.